We begin with the raw amino-acid sequence, 782 residues long: DnaJ homolog subfamily C member 16 (782 aa).

The N-terminal stretch at 1–25 (MEVRKLSISWQFLIVLVLILQILSA) is a signal peptide. The Cytoplasmic portion of the chain corresponds to 26 to 535 (LDFDPYRVLG…DSIFHNNWRE (510 aa)). Residues 29-93 (DPYRVLGVSR…EKRSNYDQYG (65 aa)) enclose the J domain. Residues 119–247 (FYFDESFFHF…LRQFVESLLP (129 aa)) enclose the Thioredoxin domain. A helical; Anchor for type IV membrane protein transmembrane segment spans residues 536–556 (MMPLLSLIFSALFILFGTVIV). Over 557 to 782 (QAFSDSNDER…FYIPSWPELD (226 aa)) the chain is Extracellular. A disordered region spans residues 562 to 593 (SNDERESSPPEKEEAQEKTGKTEPSFTKENSS). The segment covering 563-582 (NDERESSPPEKEEAQEKTGK) has biased composition (basic and acidic residues). A compositionally biased stretch (polar residues) spans 583-593 (TEPSFTKENSS). Asn-631 is a glycosylation site (N-linked (GlcNAc...) asparagine).

It localises to the endoplasmic reticulum membrane. In terms of biological role, plays an important role in regulating the size of autophagosomes during the formation process. This Homo sapiens (Human) protein is DnaJ homolog subfamily C member 16 (DNAJC16).